A 227-amino-acid polypeptide reads, in one-letter code: Glutathione S-transferase U7 (227 aa).

Residues 8–87 form the GST N-terminal domain; that stretch reads EEVKLLGMWA…YIDETWRDNP (80 aa). Glutathione contacts are provided by residues 18–19, 44–45, 58–59, and 71–72; these read SP, NK, MI, and ES. The GST C-terminal domain maps to 92–215; the sequence is DPYERTMARF…PPEDEHLKYI (124 aa).

This sequence belongs to the GST superfamily. Tau family.

The protein resides in the cytoplasm. The protein localises to the cytosol. The enzyme catalyses RX + glutathione = an S-substituted glutathione + a halide anion + H(+). In terms of biological role, may be involved in the conjugation of reduced glutathione to a wide number of exogenous and endogenous hydrophobic electrophiles and have a detoxification role against certain herbicides. This chain is Glutathione S-transferase U7 (GSTU7), found in Arabidopsis thaliana (Mouse-ear cress).